Here is a 399-residue protein sequence, read N- to C-terminus: MAREKFERNKPHVNIGTIGHVDHGKTTLTAAITNVLAKKGQAQVQNYADIDGAPEERERGITINTAHVEYETEKRHYAHVDCPGHADYVKNMITGAAQMDGAILVCAATDGPMAQTKEHILLAKQVGVPALVVALNKCDMVDDEEIIELVEMEIRELLSSYDFPGDDIPVIQVSGLKAIEGEAEWEAKIDELMDAVDASIPEPEREVDKPFLMAIEDVFSITGRGTVATGRIERGIVKVGEEVEVVGIRDPRKTTVTGVEMFRKLLDEGMAGDNVGLLLRGIQKEDIERGMVLVKPGSITPHTKFEGQVYVLKKEEGGRHTPFFAGYRPQFYIRTTDVTGQITAFTAEDGSNVEMVMPGDNIQMTGELICPVAMEMGMRFAIREGGRTIGAGVVSKIIE.

A tr-type G domain is found at 10-204; it reads KPHVNIGTIG…AVDASIPEPE (195 aa). The segment at 19 to 26 is G1; sequence GHVDHGKT. 19 to 26 provides a ligand contact to GTP; that stretch reads GHVDHGKT. Threonine 26 provides a ligand contact to Mg(2+). The segment at 60 to 64 is G2; sequence GITIN. The interval 81–84 is G3; that stretch reads DCPG. GTP contacts are provided by residues 81 to 85 and 136 to 139; these read DCPGH and NKCD. The G4 stretch occupies residues 136 to 139; sequence NKCD. The segment at 174 to 176 is G5; sequence SGL.

This sequence belongs to the TRAFAC class translation factor GTPase superfamily. Classic translation factor GTPase family. EF-Tu/EF-1A subfamily. In terms of assembly, monomer.

Its subcellular location is the cytoplasm. The catalysed reaction is GTP + H2O = GDP + phosphate + H(+). In terms of biological role, GTP hydrolase that promotes the GTP-dependent binding of aminoacyl-tRNA to the A-site of ribosomes during protein biosynthesis. The chain is Elongation factor Tu from Synechococcus sp. (strain CC9902).